The chain runs to 232 residues: Large ribosomal subunit protein uL1 (232 aa).

Belongs to the universal ribosomal protein uL1 family. Part of the 50S ribosomal subunit.

Its function is as follows. Binds directly to 23S rRNA. The L1 stalk is quite mobile in the ribosome, and is involved in E site tRNA release. In terms of biological role, protein L1 is also a translational repressor protein, it controls the translation of the L11 operon by binding to its mRNA. The sequence is that of Large ribosomal subunit protein uL1 from Jannaschia sp. (strain CCS1).